The primary structure comprises 266 residues: tRNA pseudouridine synthase A (266 aa).

Asp-57 functions as the Nucleophile in the catalytic mechanism. Tyr-115 contributes to the substrate binding site.

It belongs to the tRNA pseudouridine synthase TruA family. Homodimer.

It catalyses the reaction uridine(38/39/40) in tRNA = pseudouridine(38/39/40) in tRNA. Functionally, formation of pseudouridine at positions 38, 39 and 40 in the anticodon stem and loop of transfer RNAs. The sequence is that of tRNA pseudouridine synthase A from Buchnera aphidicola subsp. Acyrthosiphon pisum (strain APS) (Acyrthosiphon pisum symbiotic bacterium).